An 89-amino-acid polypeptide reads, in one-letter code: LYR motif-containing protein 4 (89 aa).

It belongs to the complex I LYR family.

Its subcellular location is the mitochondrion. The protein resides in the nucleus. It functions in the pathway cofactor biosynthesis; iron-sulfur cluster biosynthesis. Required for nuclear and mitochondrial iron-sulfur protein biosynthesis. This chain is LYR motif-containing protein 4 (lyrm4), found in Danio rerio (Zebrafish).